A 619-amino-acid chain; its full sequence is Chaperone protein DnaK (619 aa).

Phosphothreonine; by autocatalysis is present on Thr-175. Positions 578 to 619 (NGGAQGQGFDPNNMGGANAGAGATNNNDDNVVDADFEVQDDK) are disordered. A compositionally biased stretch (low complexity) spans 589 to 606 (NNMGGANAGAGATNNNDD). The span at 607–619 (NVVDADFEVQDDK) shows a compositional bias: acidic residues.

Belongs to the heat shock protein 70 family.

Its function is as follows. Acts as a chaperone. The polypeptide is Chaperone protein DnaK (Clostridium perfringens (strain ATCC 13124 / DSM 756 / JCM 1290 / NCIMB 6125 / NCTC 8237 / Type A)).